Consider the following 39-residue polypeptide: Bacteriocin lactococcin-G subunit alpha (39 aa).

Bacteriocin activity requires interaction of alpha and beta peptides in a molar ratio of 7:1 or 8:1 respectively.

Its function is as follows. Kills Lactococci. The chain is Bacteriocin lactococcin-G subunit alpha from Lactococcus lactis subsp. lactis (Streptococcus lactis).